The sequence spans 539 residues: Chaperone Ric-8A (539 aa).

The protein belongs to the synembryn family.

The protein localises to the cytoplasm. It is found in the cell cortex. Its function is as follows. Chaperone that specifically binds and folds nascent G alpha proteins prior to G protein heterotrimer formation, promoting their stability and activity: folds GNAI1, GNAO1, GNA13 and GNAQ. Does not fold G(s) G-alpha proteins GNAS nor GNAL. Also acts as a guanine nucleotide exchange factor (GEF) for G alpha proteins by stimulating exchange of bound GDP for free GTP. The polypeptide is Chaperone Ric-8A (ric8a) (Xenopus tropicalis (Western clawed frog)).